We begin with the raw amino-acid sequence, 427 residues long: Enolase (427 aa).

Residue Gln-163 participates in (2R)-2-phosphoglycerate binding. Glu-205 (proton donor) is an active-site residue. Mg(2+)-binding residues include Asp-242, Glu-283, and Asp-310. (2R)-2-phosphoglycerate-binding residues include Lys-335, Arg-364, Ser-365, and Lys-386. Lys-335 functions as the Proton acceptor in the catalytic mechanism.

This sequence belongs to the enolase family. The cofactor is Mg(2+).

The protein resides in the cytoplasm. Its subcellular location is the secreted. It is found in the cell surface. The catalysed reaction is (2R)-2-phosphoglycerate = phosphoenolpyruvate + H2O. It participates in carbohydrate degradation; glycolysis; pyruvate from D-glyceraldehyde 3-phosphate: step 4/5. Catalyzes the reversible conversion of 2-phosphoglycerate (2-PG) into phosphoenolpyruvate (PEP). It is essential for the degradation of carbohydrates via glycolysis. The polypeptide is Enolase (Salinispora tropica (strain ATCC BAA-916 / DSM 44818 / JCM 13857 / NBRC 105044 / CNB-440)).